The primary structure comprises 853 residues: Cytochrome P450 monooxygenase mpaDE (853 aa).

The Lumenal portion of the chain corresponds to 1–6 (MKSLSL). The chain crosses the membrane as a helical span at residues 7-29 (TWITAVAVVLYLVQRYVRSYWRL). Residues 30–853 (KDIPGPVLAK…DIENSIEGQK (824 aa)) lie on the Cytoplasmic side of the membrane. Cys-449 is a heme binding site.

Belongs to the cytochrome P450 family. The cofactor is heme.

It localises to the endoplasmic reticulum membrane. It catalyses the reaction 5-methylorsellinate + reduced [NADPH--hemoprotein reductase] + O2 = 4,6-dihydroxy-2-(hydroxymethyl)-3-methylbenzoate + oxidized [NADPH--hemoprotein reductase] + H2O + H(+). The catalysed reaction is 4,6-dihydroxy-2-(hydroxymethyl)-3-methylbenzoate + H(+) = 5,7-dihydroxy-4-methylphthalide + H2O. Its pathway is secondary metabolite biosynthesis; terpenoid biosynthesis. Its function is as follows. Cytochrome P450 monooxygenase; part of the gene cluster that mediates the biosynthesis of mycophenolic acid (MPA), the first isolated antibiotic natural product in the world obtained from a culture of Penicillium brevicompactum in 1893. MpaDE is an endoplasmic reticulum-bound enzyme that catalyzes the conversion of 5-methylorsellinic acid (5MOA) into the phthalide compound 5,7-dihydroxy-4,6-dimethylphthalide (DHMP). MpaDE first catalyzes hydroxylation of 5-MOA to 4,6-dihydroxy-2-(hydroxymethyl)-3-methylbenzoic acid (DHMB), and then acts as a lactone synthase that catalyzes the ring closure to convert DHMB into DHMP. The first step of the pathway is the synthesis of 5-methylorsellinic acid (5MOA) by the cytosolic polyketide synthase mpaC. 5MOA is then converted to the phthalide compound 5,7-dihydroxy-4,6-dimethylphthalide (DHMP) by the endoplasmic reticulum-bound cytochrome P450 monooxygenase mpaDE. MpaDE first catalyzes hydroxylation of 5-MOA to 4,6-dihydroxy-2-(hydroxymethyl)-3-methylbenzoic acid (DHMB). MpaDE then acts as a lactone synthase that catalyzes the ring closure to convert DHMB into DHMP. The next step is the prenylation of DHMP by the Golgi apparatus-associated prenyltransferase mpaA to yield farnesyl-DHMP (FDHMP). The ER-bound oxygenase mpaB then mediates the oxidative cleavage the C19-C20 double bond in FDHMP to yield FDHMP-3C via a mycophenolic aldehyde intermediate. The O-methyltransferase mpaG catalyzes the methylation of FDHMP-3C to yield MFDHMP-3C. After the cytosolic methylation of FDHMP-3C, MFDHMP-3C enters into peroxisomes probably via free diffusion due to its low molecular weight. Upon a peroxisomal CoA ligation reaction, catalyzed by a beta-oxidation component enzyme acyl-CoA ligase ACL891, MFDHMP-3C-CoA would then be restricted to peroxisomes for the following beta-oxidation pathway steps. The peroxisomal beta-oxidation machinery than converts MFDHMP-3C-CoA into MPA_CoA, via a beta-oxidation chain-shortening process. Finally mpaH acts as a peroxisomal acyl-CoA hydrolase with high substrate specificity toward MPA-CoA to release the final product MPA. The chain is Cytochrome P450 monooxygenase mpaDE from Penicillium brevicompactum.